A 388-amino-acid chain; its full sequence is Succinate--CoA ligase [ADP-forming] subunit beta (388 aa).

An ATP-grasp domain is found at 9–244; that stretch reads KQLFARYGLP…QSQEDPREAQ (236 aa). ATP contacts are provided by residues K46, 53–55, E99, T102, and E107; that span reads GRG. 2 residues coordinate Mg(2+): N199 and D213. Substrate-binding positions include N264 and 321-323; that span reads GIV.

This sequence belongs to the succinate/malate CoA ligase beta subunit family. In terms of assembly, heterotetramer of two alpha and two beta subunits. It depends on Mg(2+) as a cofactor.

It carries out the reaction succinate + ATP + CoA = succinyl-CoA + ADP + phosphate. The enzyme catalyses GTP + succinate + CoA = succinyl-CoA + GDP + phosphate. It functions in the pathway carbohydrate metabolism; tricarboxylic acid cycle; succinate from succinyl-CoA (ligase route): step 1/1. Functionally, succinyl-CoA synthetase functions in the citric acid cycle (TCA), coupling the hydrolysis of succinyl-CoA to the synthesis of either ATP or GTP and thus represents the only step of substrate-level phosphorylation in the TCA. The beta subunit provides nucleotide specificity of the enzyme and binds the substrate succinate, while the binding sites for coenzyme A and phosphate are found in the alpha subunit. The sequence is that of Succinate--CoA ligase [ADP-forming] subunit beta from Escherichia coli O8 (strain IAI1).